Consider the following 177-residue polypeptide: MANLWEDLETGPDAPDVIYAVVECLKGERNKYEYDKDIPGVVLDRVLHSNVHYPSDYGFIPQSYYDDGDPFDVLVLVEDQTFPGCVIEARPVALMEMDDDGEQDDKVIAVPEEDPRYDDVEDVDDLTDQQKAEIAEFFETYKNLEADKETAVLGWGDAQAAKDAIEHAQDLYDEQFA.

Substrate-binding residues include Lys31, Arg45, and Tyr57. Residues Asp67, Asp72, and Asp104 each coordinate Mg(2+). Position 141 (Tyr141) interacts with substrate.

Belongs to the PPase family. As to quaternary structure, homohexamer. The cofactor is Mg(2+).

The protein resides in the cytoplasm. It catalyses the reaction diphosphate + H2O = 2 phosphate + H(+). Its function is as follows. Catalyzes the hydrolysis of inorganic pyrophosphate (PPi) forming two phosphate ions. In Halobacterium salinarum (strain ATCC 700922 / JCM 11081 / NRC-1) (Halobacterium halobium), this protein is Inorganic pyrophosphatase.